The sequence spans 288 residues: Phosphatidylserine decarboxylase proenzyme (288 aa).

Active-site charge relay system; for autoendoproteolytic cleavage activity residues include Asp-95, His-152, and Ser-255. Residue Ser-255 is the Schiff-base intermediate with substrate; via pyruvic acid; for decarboxylase activity of the active site. The residue at position 255 (Ser-255) is a Pyruvic acid (Ser); by autocatalysis.

The protein belongs to the phosphatidylserine decarboxylase family. PSD-B subfamily. Prokaryotic type I sub-subfamily. As to quaternary structure, heterodimer of a large membrane-associated beta subunit and a small pyruvoyl-containing alpha subunit. Requires pyruvate as cofactor. In terms of processing, is synthesized initially as an inactive proenzyme. Formation of the active enzyme involves a self-maturation process in which the active site pyruvoyl group is generated from an internal serine residue via an autocatalytic post-translational modification. Two non-identical subunits are generated from the proenzyme in this reaction, and the pyruvate is formed at the N-terminus of the alpha chain, which is derived from the carboxyl end of the proenzyme. The autoendoproteolytic cleavage occurs by a canonical serine protease mechanism, in which the side chain hydroxyl group of the serine supplies its oxygen atom to form the C-terminus of the beta chain, while the remainder of the serine residue undergoes an oxidative deamination to produce ammonia and the pyruvoyl prosthetic group on the alpha chain. During this reaction, the Ser that is part of the protease active site of the proenzyme becomes the pyruvoyl prosthetic group, which constitutes an essential element of the active site of the mature decarboxylase.

It localises to the cell membrane. It catalyses the reaction a 1,2-diacyl-sn-glycero-3-phospho-L-serine + H(+) = a 1,2-diacyl-sn-glycero-3-phosphoethanolamine + CO2. Its pathway is phospholipid metabolism; phosphatidylethanolamine biosynthesis; phosphatidylethanolamine from CDP-diacylglycerol: step 2/2. In terms of biological role, catalyzes the formation of phosphatidylethanolamine (PtdEtn) from phosphatidylserine (PtdSer). The chain is Phosphatidylserine decarboxylase proenzyme from Methylococcus capsulatus (strain ATCC 33009 / NCIMB 11132 / Bath).